Reading from the N-terminus, the 92-residue chain is Small ribosomal subunit protein uS19 (92 aa).

Belongs to the universal ribosomal protein uS19 family.

Protein S19 forms a complex with S13 that binds strongly to the 16S ribosomal RNA. This is Small ribosomal subunit protein uS19 from Legionella pneumophila (strain Paris).